The primary structure comprises 290 residues: ATP synthase gamma chain (290 aa).

Belongs to the ATPase gamma chain family. In terms of assembly, F-type ATPases have 2 components, CF(1) - the catalytic core - and CF(0) - the membrane proton channel. CF(1) has five subunits: alpha(3), beta(3), gamma(1), delta(1), epsilon(1). CF(0) has three main subunits: a, b and c.

It localises to the cell membrane. In terms of biological role, produces ATP from ADP in the presence of a proton gradient across the membrane. The gamma chain is believed to be important in regulating ATPase activity and the flow of protons through the CF(0) complex. In Roseiflexus sp. (strain RS-1), this protein is ATP synthase gamma chain.